The primary structure comprises 297 residues: Alpha-tubulin N-acetyltransferase 1 (297 aa).

One can recognise an N-acetyltransferase domain in the interval 1–184; the sequence is MDFPYDLNAL…NNFVVFAGFF (184 aa). Acetyl-CoA is bound by residues 118–131 and 154–163; these read FYVT…GYGS and SPKFLSFLEK. Residues 226–297 form a disordered region; it reads FVRPGGPPHS…SLNRSRLSFH (72 aa). The segment covering 230–240 has biased composition (pro residues); it reads GGPPHSPPLLP. Low complexity predominate over residues 241–264; the sequence is SSPQSRSLSVGSSPSRAPLRPAAA. 2 stretches are compositionally biased toward polar residues: residues 266–278 and 286–297; these read VLQQ…SPLN and TSSLNRSRLSFH.

It belongs to the acetyltransferase ATAT1 family. In terms of assembly, monomer.

The protein localises to the cytoplasm. Its subcellular location is the membrane. The protein resides in the clathrin-coated pit. It is found in the cell junction. It localises to the focal adhesion. The protein localises to the cell projection. Its subcellular location is the axon. The protein resides in the cytoskeleton. It is found in the spindle. The catalysed reaction is L-lysyl-[alpha-tubulin] + acetyl-CoA = N(6)-acetyl-L-lysyl-[alpha-tubulin] + CoA + H(+). Specifically acetylates 'Lys-40' in alpha-tubulin on the lumenal side of microtubules. Promotes microtubule destabilization and accelerates microtubule dynamics; this activity may be independent of acetylation activity. Acetylates alpha-tubulin with a slow enzymatic rate, due to a catalytic site that is not optimized for acetyl transfer. Enters the microtubule through each end and diffuses quickly throughout the lumen of microtubules. Acetylates only long/old microtubules because of its slow acetylation rate since it does not have time to act on dynamically unstable microtubules before the enzyme is released. May be involved in neuron development. Acetylates alpha-tubulin in neurons, but not in cilia. The polypeptide is Alpha-tubulin N-acetyltransferase 1 (Danio rerio (Zebrafish)).